The primary structure comprises 630 residues: Putative F-box/LRR-repeat protein At3g49150 (630 aa).

The F-box domain occupies 15–63 (KDIISDLPEALICHILSFLPIEDSALTSVLSKKWQHLFAFRPNLEFDDA). LRR repeat units lie at residues 101–129 (CRDFTDPTCVSRWISNVMERGVSDLDLRC), 152–178 (RIETGNGAFIDVEDVFLPNLKTLYLNK), 180–205 (LLRHSDNGFVKLITSCHVLEDLFIMN), 228–253 (CEDVHAVNPESVSFDTPNLVYFVYHD), 300–325 (ISNVQILELFANTIEVLTFCCEQIPV), 337–362 (DQKAGWESLPVLLKNCPDLESLIFDG), 406–436 (CDDYDDMEKQIELVMYFLETMPNLEEMKLFY), 437–465 (DTQIYEDVISKLQMDLRRTLSLRSLFNAR), and 567–590 (DSSIQLDFVQQIVHNVHSLTGLNW).

This is Putative F-box/LRR-repeat protein At3g49150 from Arabidopsis thaliana (Mouse-ear cress).